The chain runs to 388 residues: 1-deoxy-D-xylulose 5-phosphate reductoisomerase (388 aa).

NADPH contacts are provided by threonine 10, glycine 11, serine 12, isoleucine 13, asparagine 37, and asparagine 121. Lysine 122 provides a ligand contact to 1-deoxy-D-xylulose 5-phosphate. NADPH is bound at residue glutamate 123. Aspartate 147 is a Mn(2+) binding site. 1-deoxy-D-xylulose 5-phosphate contacts are provided by serine 148, glutamate 149, serine 173, and histidine 196. Mn(2+) is bound at residue glutamate 149. Glycine 202 is a binding site for NADPH. 1-deoxy-D-xylulose 5-phosphate contacts are provided by serine 209, asparagine 214, lysine 215, and glutamate 218. Glutamate 218 provides a ligand contact to Mn(2+).

The protein belongs to the DXR family. Mg(2+) serves as cofactor. Requires Mn(2+) as cofactor.

It carries out the reaction 2-C-methyl-D-erythritol 4-phosphate + NADP(+) = 1-deoxy-D-xylulose 5-phosphate + NADPH + H(+). Its pathway is isoprenoid biosynthesis; isopentenyl diphosphate biosynthesis via DXP pathway; isopentenyl diphosphate from 1-deoxy-D-xylulose 5-phosphate: step 1/6. Functionally, catalyzes the NADPH-dependent rearrangement and reduction of 1-deoxy-D-xylulose-5-phosphate (DXP) to 2-C-methyl-D-erythritol 4-phosphate (MEP). In Lachnoclostridium phytofermentans (strain ATCC 700394 / DSM 18823 / ISDg) (Clostridium phytofermentans), this protein is 1-deoxy-D-xylulose 5-phosphate reductoisomerase.